The primary structure comprises 282 residues: Glutamate racemase (282 aa).

Substrate is bound by residues 13–14 (DS) and 45–46 (YG). Cys-76 functions as the Proton donor/acceptor in the catalytic mechanism. 77–78 (NT) contacts substrate. Residue Cys-186 is the Proton donor/acceptor of the active site. 187–188 (TH) provides a ligand contact to substrate.

The protein belongs to the aspartate/glutamate racemases family.

It carries out the reaction L-glutamate = D-glutamate. The protein operates within cell wall biogenesis; peptidoglycan biosynthesis. In terms of biological role, provides the (R)-glutamate required for cell wall biosynthesis. The protein is Glutamate racemase of Ralstonia pickettii (strain 12J).